We begin with the raw amino-acid sequence, 254 residues long: 5'/3'-nucleotidase SurE (254 aa).

Asp9, Asp10, Ser40, and Asn93 together coordinate a divalent metal cation.

Belongs to the SurE nucleotidase family. It depends on a divalent metal cation as a cofactor.

It localises to the cytoplasm. It carries out the reaction a ribonucleoside 5'-phosphate + H2O = a ribonucleoside + phosphate. The catalysed reaction is a ribonucleoside 3'-phosphate + H2O = a ribonucleoside + phosphate. The enzyme catalyses [phosphate](n) + H2O = [phosphate](n-1) + phosphate + H(+). Nucleotidase with a broad substrate specificity as it can dephosphorylate various ribo- and deoxyribonucleoside 5'-monophosphates and ribonucleoside 3'-monophosphates with highest affinity to 3'-AMP. Also hydrolyzes polyphosphate (exopolyphosphatase activity) with the preference for short-chain-length substrates (P20-25). Might be involved in the regulation of dNTP and NTP pools, and in the turnover of 3'-mononucleotides produced by numerous intracellular RNases (T1, T2, and F) during the degradation of various RNAs. The protein is 5'/3'-nucleotidase SurE of Yersinia pestis bv. Antiqua (strain Antiqua).